The chain runs to 215 residues: Adenylate kinase (215 aa).

Position 10-15 (10-15 (GAGKGT)) interacts with ATP. An NMP region spans residues 30–59 (STGDILRANVREGTELGLAAKEYMDKGELV). Residues T31, R36, 57-59 (ELV), 85-88 (GYPR), and Q92 each bind AMP. Residues 126 to 162 (GRLMCNCGASYHRTFNPPKKDDVCDICGGKVFQRADD) form an LID region. R127 contacts ATP. The Zn(2+) site is built by C130 and C132. 135-136 (SY) is a binding site for ATP. Residues C149 and C152 each coordinate Zn(2+). Residues R159 and R170 each coordinate AMP. K198 is a binding site for ATP.

This sequence belongs to the adenylate kinase family. Monomer.

The protein resides in the cytoplasm. The catalysed reaction is AMP + ATP = 2 ADP. It participates in purine metabolism; AMP biosynthesis via salvage pathway; AMP from ADP: step 1/1. Catalyzes the reversible transfer of the terminal phosphate group between ATP and AMP. Plays an important role in cellular energy homeostasis and in adenine nucleotide metabolism. The sequence is that of Adenylate kinase from Methanosarcina barkeri (strain Fusaro / DSM 804).